We begin with the raw amino-acid sequence, 732 residues long: Adducin-related protein 1 (732 aa).

2 disordered regions span residues 1 to 22 (MIGR…DPEY) and 684 to 732 (TRFS…KKDK). Positions 685-705 (RFSSTQGTSEGNTTSRSCTTA) are enriched in polar residues. Positions 716-732 (KKKKKKGFLSFMRKKDK) are enriched in basic residues.

This sequence belongs to the aldolase class II family. Adducin subfamily.

It is found in the cytoplasm. It localises to the cytoskeleton. The protein resides in the cell membrane. In terms of biological role, membrane-cytoskeleton-associated protein that promotes the assembly of the spectrin-actin network. Plays a role in time-dependent memmory loss and the retention of conditioned behavior over time. This is Adducin-related protein 1 from Caenorhabditis elegans.